The following is a 223-amino-acid chain: uncharacterized protein (223 aa).

This sequence to M.jannaschii MJ0575.

This is an uncharacterized protein from Methanocaldococcus jannaschii (strain ATCC 43067 / DSM 2661 / JAL-1 / JCM 10045 / NBRC 100440) (Methanococcus jannaschii).